The following is a 364-amino-acid chain: Dual-specificity RNA methyltransferase RlmN (364 aa).

Glutamate 91 (proton acceptor) is an active-site residue. A Radical SAM core domain is found at 97–333 (EDDRGTLCIS…TTTRKTRGDD (237 aa)). Cysteine 104 and cysteine 338 are disulfide-bonded. Positions 111, 115, and 118 each coordinate [4Fe-4S] cluster. Residues 164 to 165 (GE), serine 196, 218 to 220 (SLH), and asparagine 295 contribute to the S-adenosyl-L-methionine site. The active-site S-methylcysteine intermediate is the cysteine 338.

Belongs to the radical SAM superfamily. RlmN family. [4Fe-4S] cluster is required as a cofactor.

It localises to the cytoplasm. It catalyses the reaction adenosine(2503) in 23S rRNA + 2 reduced [2Fe-2S]-[ferredoxin] + 2 S-adenosyl-L-methionine = 2-methyladenosine(2503) in 23S rRNA + 5'-deoxyadenosine + L-methionine + 2 oxidized [2Fe-2S]-[ferredoxin] + S-adenosyl-L-homocysteine. The catalysed reaction is adenosine(37) in tRNA + 2 reduced [2Fe-2S]-[ferredoxin] + 2 S-adenosyl-L-methionine = 2-methyladenosine(37) in tRNA + 5'-deoxyadenosine + L-methionine + 2 oxidized [2Fe-2S]-[ferredoxin] + S-adenosyl-L-homocysteine. Its function is as follows. Specifically methylates position 2 of adenine 2503 in 23S rRNA and position 2 of adenine 37 in tRNAs. m2A2503 modification seems to play a crucial role in the proofreading step occurring at the peptidyl transferase center and thus would serve to optimize ribosomal fidelity. This Dechloromonas aromatica (strain RCB) protein is Dual-specificity RNA methyltransferase RlmN.